The chain runs to 421 residues: Mannose-1-phosphate guanylyltransferase regulatory subunit alpha (421 aa).

The substrate-binding domain stretch occupies residues L2–A252. E85 and Q248 together coordinate GDP-alpha-D-mannose. Residues L274–L421 are hexapeptide repeat domain. The tract at residues T357–I385 is C-loop.

The protein belongs to the transferase hexapeptide repeat family. As to quaternary structure, component of the GMPPA-GMPPB mannose-1-phosphate guanylyltransferase complex composed of 4 gmppa subunits and 8 gmppb subunits; the complex is organized into three layers, a central layer made up of 2 gmppa dimers sandwiched between two layers each made up of 2 gmppb dimers.

It localises to the cytoplasm. Regulatory subunit of the GMPPA-GMPPB mannose-1-phosphate guanylyltransferase complex; reduces the catalytic activity of GMPPB when part of the complex. Mediates allosteric feedback inhibition of GMPPB catalytic activity upon binding GDP-alpha-D-mannose. Together with GMPPB regulates GDP-alpha-D-mannose levels. This is Mannose-1-phosphate guanylyltransferase regulatory subunit alpha (gmppa) from Xenopus tropicalis (Western clawed frog).